Here is a 167-residue protein sequence, read N- to C-terminus: Ribosome maturation factor RimM (167 aa).

In terms of domain architecture, PRC barrel spans 92-165; that stretch reads EDTYYIADII…RITIDPIEGM (74 aa).

The protein belongs to the RimM family. Binds ribosomal protein uS19.

Its subcellular location is the cytoplasm. In terms of biological role, an accessory protein needed during the final step in the assembly of 30S ribosomal subunit, possibly for assembly of the head region. Essential for efficient processing of 16S rRNA. May be needed both before and after RbfA during the maturation of 16S rRNA. It has affinity for free ribosomal 30S subunits but not for 70S ribosomes. This is Ribosome maturation factor RimM from Alkaliphilus oremlandii (strain OhILAs) (Clostridium oremlandii (strain OhILAs)).